The sequence spans 176 residues: Peptide methionine sulfoxide reductase MsrA (176 aa).

Residue Cys-10 is part of the active site.

Belongs to the MsrA Met sulfoxide reductase family.

The catalysed reaction is L-methionyl-[protein] + [thioredoxin]-disulfide + H2O = L-methionyl-(S)-S-oxide-[protein] + [thioredoxin]-dithiol. It carries out the reaction [thioredoxin]-disulfide + L-methionine + H2O = L-methionine (S)-S-oxide + [thioredoxin]-dithiol. Functionally, has an important function as a repair enzyme for proteins that have been inactivated by oxidation. Catalyzes the reversible oxidation-reduction of methionine sulfoxide in proteins to methionine. The protein is Peptide methionine sulfoxide reductase MsrA of Sulfolobus acidocaldarius (strain ATCC 33909 / DSM 639 / JCM 8929 / NBRC 15157 / NCIMB 11770).